Here is a 567-residue protein sequence, read N- to C-terminus: Proline--tRNA ligase (567 aa).

Belongs to the class-II aminoacyl-tRNA synthetase family. ProS type 1 subfamily. As to quaternary structure, homodimer.

Its subcellular location is the cytoplasm. It carries out the reaction tRNA(Pro) + L-proline + ATP = L-prolyl-tRNA(Pro) + AMP + diphosphate. Catalyzes the attachment of proline to tRNA(Pro) in a two-step reaction: proline is first activated by ATP to form Pro-AMP and then transferred to the acceptor end of tRNA(Pro). As ProRS can inadvertently accommodate and process non-cognate amino acids such as alanine and cysteine, to avoid such errors it has two additional distinct editing activities against alanine. One activity is designated as 'pretransfer' editing and involves the tRNA(Pro)-independent hydrolysis of activated Ala-AMP. The other activity is designated 'posttransfer' editing and involves deacylation of mischarged Ala-tRNA(Pro). The misacylated Cys-tRNA(Pro) is not edited by ProRS. The chain is Proline--tRNA ligase from Staphylococcus aureus (strain bovine RF122 / ET3-1).